The following is a 90-amino-acid chain: Putative regulatory protein Dred_1699 (90 aa).

This sequence belongs to the RemA family.

This is Putative regulatory protein Dred_1699 from Desulforamulus reducens (strain ATCC BAA-1160 / DSM 100696 / MI-1) (Desulfotomaculum reducens).